Here is a 305-residue protein sequence, read N- to C-terminus: NAD-dependent protein deacylase sirtuin-5, mitochondrial (305 aa).

The transit peptide at 1-32 directs the protein to the mitochondrion; that stretch reads MIVRQLWCSRGSTSHLCAAVRLNWRSPKMTRP. The Deacetylase sirtuin-type domain occupies 33–303; that stretch reads SSDLTAFREH…PPALERHESE (271 aa). 54–73 contributes to the NAD(+) binding site; it reads GAGVSAESGVPTFRGPGGFW. Substrate contacts are provided by Tyr98 and Arg101. An NAD(+)-binding site is contributed by 136–139; that stretch reads QNID. His154 serves as the catalytic Proton acceptor. 4 residues coordinate Zn(2+): Cys162, Cys165, Cys203, and Cys208. NAD(+) contacts are provided by residues 245-247, 271-273, and Cys289; these read GTS and NME.

It belongs to the sirtuin family. Class III subfamily. Zn(2+) is required as a cofactor.

The protein localises to the mitochondrion. The protein resides in the cytoplasm. It localises to the cytosol. It is found in the nucleus. The catalysed reaction is N(6)-malonyl-L-lysyl-[protein] + NAD(+) + H2O = 2''-O-malonyl-ADP-D-ribose + nicotinamide + L-lysyl-[protein]. It catalyses the reaction N(6)-succinyl-L-lysyl-[protein] + NAD(+) + H2O = 2''-O-succinyl-ADP-D-ribose + nicotinamide + L-lysyl-[protein]. The enzyme catalyses N(6)-glutaryl-L-lysyl-[protein] + NAD(+) + H2O = 2''-O-glutaryl-ADP-D-ribose + nicotinamide + L-lysyl-[protein]. In terms of biological role, NAD-dependent lysine demalonylase, desuccinylase and deglutarylase that specifically removes malonyl, succinyl and glutaryl groups on target proteins. Has weak NAD-dependent protein deacetylase activity; however this activity may not be physiologically relevant in vivo. This Danio rerio (Zebrafish) protein is NAD-dependent protein deacylase sirtuin-5, mitochondrial (sirt5).